The primary structure comprises 89 residues: Small ribosomal subunit protein uS15 (89 aa).

The protein belongs to the universal ribosomal protein uS15 family. As to quaternary structure, part of the 30S ribosomal subunit. Forms a bridge to the 50S subunit in the 70S ribosome, contacting the 23S rRNA.

Functionally, one of the primary rRNA binding proteins, it binds directly to 16S rRNA where it helps nucleate assembly of the platform of the 30S subunit by binding and bridging several RNA helices of the 16S rRNA. Its function is as follows. Forms an intersubunit bridge (bridge B4) with the 23S rRNA of the 50S subunit in the ribosome. This is Small ribosomal subunit protein uS15 from Buchnera aphidicola subsp. Schizaphis graminum (strain Sg).